The primary structure comprises 958 residues: MATFAKPENALKRAEELITVGQKQEALQALHDLITSRRYRAWQKTLERIMFKYVELCVDMRRGRFAKDGLIQYRIVCQQVNINSLEEVIKHFMHLATERAELARNQAQALEEALDVEDLEADKRPEDLMLSYVSGEKGKDRSDRELVTPWFKFLWETYRTVLEILRNNSRLEALYAMTAHRAFQFCKQYKRTTEFRRLCEIIRNHLANLNKYRDQRDRPDLSAPESLQLYLDTRFEQLKVATELGLWQEAFRSIEDIYGLMCMVKKTPKASLMVVYYGKLTEIFWMSSNHLYHAYAWLKLFSLQKSFNKNLSQKDLQLIASSVVLAALSVPPYDQSYGASHLELENEKERSLRVANLIGFEVEPKAENRVALSRSSLLSELVSKGVMSCVTQEVKDLYHLLENEFLPLDLALKVQPVLSKISKLGGKLSSVSSVPEVQLSQYVPALEKLATLRLLQQVSQVYQTIQIDNISKMIPFFDFTVIEKISVDAVRRNFLAIKVDHMKGLSSLVNRVLRRKDSGIICLFLAESLSKARTMIYPPAKKAAKLGEALSNLAEIVEKEHKRLLARKSIIEKRKEEQERLLLEMERVEETKRRDVQKMTEEAEQKRIAAEYEQRRNQRILKEIEDRELEEAQALLHEAEKRSKRKKKPVLEGEKMTKKVIMELALNEQLRERQEMEKKLLKFAKSMDHLERAKREEAAPLIESAFKQRLAEEAALHEREQQQEIELSRQRHAGDLEEKRRLARMLENKRILQEKVVSSREAEFTRMKRERQERISQIIQSRKQEREARRKMIFFLRSEEERQKRLQEEEEARKREEAERRKKEEAERQAKLDEIAEKQRRRMLELEEKEKREREEILRKSTAVLPKPAEPPTLGRPAELGGAAPIPAAAATAPTPGPGKYVPKHLRTKMDGAGQAPPPETDKWGGGSKPDDRPSWRDERKPPSFGSGSRTSWPASRR.

The stretch at 93-123 forms a coiled coil; it reads MHLATERAELARNQAQALEEALDVEDLEADK. The 198-residue stretch at 316-513 folds into the PCI domain; that stretch reads LQLIASSVVL…GLSSLVNRVL (198 aa). 2 coiled-coil regions span residues 548–696 and 796–861; these read EALS…AKRE and LRSE…LRKS. A compositionally biased stretch (basic and acidic residues) spans 804 to 859; sequence KRLQEEEEARKREEAERRKKEEAERQAKLDEIAEKQRRRMLELEEKEKREREEILR. Positions 804–958 are disordered; it reads KRLQEEEEAR…SRTSWPASRR (155 aa). The span at 877 to 894 shows a compositional bias: low complexity; the sequence is PAELGGAAPIPAAAATAP. Residues 929–942 show a composition bias toward basic and acidic residues; the sequence is KPDDRPSWRDERKP. A compositionally biased stretch (polar residues) spans 946 to 958; that stretch reads GSGSRTSWPASRR.

The protein belongs to the eIF-3 subunit A family. In terms of assembly, component of the eukaryotic translation initiation factor 3 (eIF-3) complex.

Its subcellular location is the cytoplasm. RNA-binding component of the eukaryotic translation initiation factor 3 (eIF-3) complex, which is involved in protein synthesis of a specialized repertoire of mRNAs and, together with other initiation factors, stimulates binding of mRNA and methionyl-tRNAi to the 40S ribosome. The eIF-3 complex specifically targets and initiates translation of a subset of mRNAs involved in cell proliferation. The sequence is that of Eukaryotic translation initiation factor 3 subunit A (TIF3A1) from Nicotiana tabacum (Common tobacco).